The primary structure comprises 876 residues: Pre-mRNA-splicing factor ATP-dependent RNA helicase-like protein PRP2 (876 aa).

The segment at 1–111 is disordered; that stretch reads MSSITSETGK…KGLLGDSENE (111 aa). Ser-2 bears the N-acetylserine mark. Positions 61–70 are enriched in polar residues; it reads VFSNTNQGPE. Positions 233 to 399 constitute a Helicase ATP-binding domain; sequence LQEIKKNQVL…FDNCPIFNVP (167 aa). Position 246–253 (246–253) interacts with ATP; sequence GETGSGKT. The DEAH box motif lies at 346–349; it reads DEAH. Residues 424-598 form the Helicase C-terminal domain; the sequence is TIFQIHTTQS…NTVLLLLSLG (175 aa).

Belongs to the DEAD box helicase family. DEAH subfamily. As to quaternary structure, interacts directly with pre-mRNA. According to PubMed:2251118, associated with spliceosomes prior to and throughout step 1 of the splicing reaction. According to PubMed:8943336, it leaves the spliceosome before reaction 1. Interacts with SPP2.

Its subcellular location is the nucleus. It catalyses the reaction ATP + H2O = ADP + phosphate + H(+). Its function is as follows. Involved in pre-mRNA splicing. Is required together with ATP and at least one other factor, for the first cleavage-ligation reaction. Functions as a molecular motor in the activation of the precatalytic spliceosome for the first transesterification reaction of pre-mRNA splicing by hydrolyzing ATP to cause the activation of the spliceosome without the occurrence of splicing. Capable of hydrolyzing nucleoside triphosphates in the presence of single-stranded RNAs such as poly(U). This Saccharomyces cerevisiae (strain ATCC 204508 / S288c) (Baker's yeast) protein is Pre-mRNA-splicing factor ATP-dependent RNA helicase-like protein PRP2 (PRP2).